The chain runs to 592 residues: MCVNRVRSIVSLTLIAYLSVLMGVSVYFYVLIESVYQQFSDMSENYVQLVKDTSSTPIVVATHGHSTNRSHQSVLFTARADVNISMETILHVEFNYTTALGTMDDTFNIINFYGLKYRHVDLIDPFGNSLPVVNSKSSFGFTDCSSDERVRCPSTRRPFTGTLDCLTLDMHMQSWNRDRSTDHFKRPIIIWLGEIMGSLWRLIGNGVIVIRVNYRRGVYGFVCHRDERLPYYNQGVNDVMHAIEWVTENAERFAGDTKRITLAGHGDDGKVVEYVRMYHSHHLPLDKYIVMSAAETGSRDLTCSSNSNILVTAARILGMPSVPVHDTTAGERGVYDAVRYLSFIEPKRLMERLYDLKEIFQPCPGEIRSTASDVNGLGKAFEGVDSDDCKFINTDTPVLYMNTLNEYANKVKLDDSFMHARAHTLRRVIEHVLARRFKPHRVTRYCNVTISEPAEIGSERYEPCDGEVINVESLGRVLTDFEYIAPTSRICEAAVGCGASFYHYVYDFKNASHGDDLRLLMSEHDQRNLTKFERQLADGIGMMISRFVRRGYPVVKRDNWCSSTSLVAQIMEINTTPNVITTQTQVRGTVER.

The chain crosses the membrane as a helical span at residues 12 to 32; the sequence is LTLIAYLSVLMGVSVYFYVLI. Asparagine 68, asparagine 83, asparagine 95, asparagine 447, and asparagine 510 each carry an N-linked (GlcNAc...) asparagine; by host glycan. Catalysis depends on histidine 513, which acts as the Charge relay system. A glycan (N-linked (GlcNAc...) asparagine; by host) is linked at asparagine 528.

This sequence belongs to the type-B carboxylesterase/lipase family.

The protein resides in the membrane. The catalysed reaction is a carboxylic ester + H2O = an alcohol + a carboxylate + H(+). This is Putative esterase from Spodoptera frugiperda (Fall armyworm).